We begin with the raw amino-acid sequence, 537 residues long: DELLA protein GAI (537 aa).

The segment at 1–33 is disordered; it reads MKRDHQEISGSGSNPAESSSIKGKLWEEDPDAG. Residues 9–20 show a composition bias toward low complexity; the sequence is SGSGSNPAESSS. A DELLA motif motif is present at residues 37–41; sequence DELLA. A disordered region spans residues 131–157; it reads KSDPGLEITRKRAKTESSSSSSSTTTR. Low complexity predominate over residues 147–156; it reads SSSSSSSTTT. Residues 162–533 form the GRAS domain; sequence IDSQEAGVRL…RPLIAHLGLA (372 aa). The segment at 169-223 is leucine repeat I (LRI); that stretch reads VRLVHTLMACAEAVQQDNLKLADALVKHIGLLASSQTGAMRKVATYFAEALARRI. The VHIID stretch occupies residues 241 to 306; the sequence is QIPFYETCPY…GGPPAFRLTG (66 aa). The short motif at 272–276 is the VHIID element; sequence VHVID. The interval 320 to 352 is leucine repeat II (LRII); that stretch reads QVGWKLAQLAERIGIEFEFRGFVANSLADLEPE. The interval 364 to 454 is PFYRE; that stretch reads VAVNAVFELH…ELYLGRQICN (91 aa). The LXXLL motif motif lies at 372–376; sequence LHPLL. The SAW stretch occupies residues 457–533; sequence ACEGMDRVER…RPLIAHLGLA (77 aa).

The protein belongs to the GRAS family. DELLA subfamily. In terms of processing, phosphorylated. Ubiquitinated. Upon GA application it is ubiquitinated, leading to its subsequent degradation.

The protein resides in the nucleus. Probable transcriptional regulator that acts as a repressor of the gibberellin (GA) signaling pathway. Probably acts by participating in large multiprotein complexes that represses transcription of GA-inducible genes. Upon GA application, it is degraded by the proteasome, allowing the GA signaling pathway. The chain is DELLA protein GAI (GAI) from Gossypium hirsutum (Upland cotton).